A 159-amino-acid polypeptide reads, in one-letter code: Transcription elongation factor A protein-like 1 (159 aa).

The tract at residues 1–99 (MDKPRKENEE…CGVGKHKLEE (99 aa)) is disordered. Basic and acidic residues predominate over residues 17–34 (KTDEERPPVEHSPEKQSL). Positions 37–54 (QSSEEQSSEEEFFPEELL) are enriched in acidic residues. The span at 64–80 (SEERPPQEGLSRKDLFE) shows a compositional bias: basic and acidic residues.

It belongs to the TFS-II family. TFA subfamily.

It localises to the nucleus. May be involved in transcriptional regulation. Modulates various viral and cellular promoters in a promoter context-dependent manner. Does not bind DNA directly. The chain is Transcription elongation factor A protein-like 1 from Ateles geoffroyi (Black-handed spider monkey).